The chain runs to 248 residues: Triosephosphate isomerase (248 aa).

Residue 9–11 (NWK) participates in substrate binding. The Electrophile role is filled by His94. Glu164 (proton acceptor) is an active-site residue. Residues Gly170, Ser209, and 230-231 (GG) each bind substrate.

It belongs to the triosephosphate isomerase family. In terms of assembly, homodimer.

It is found in the cytoplasm. The catalysed reaction is D-glyceraldehyde 3-phosphate = dihydroxyacetone phosphate. It functions in the pathway carbohydrate biosynthesis; gluconeogenesis. Its pathway is carbohydrate degradation; glycolysis; D-glyceraldehyde 3-phosphate from glycerone phosphate: step 1/1. Involved in the gluconeogenesis. Catalyzes stereospecifically the conversion of dihydroxyacetone phosphate (DHAP) to D-glyceraldehyde-3-phosphate (G3P). The chain is Triosephosphate isomerase from Hahella chejuensis (strain KCTC 2396).